We begin with the raw amino-acid sequence, 2193 residues long: ATP-dependent helicase BRM (2193 aa).

Met1 carries the N-acetylmethionine modification. The span at 1–10 (MQSGGSGGGP) shows a compositional bias: gly residues. 5 disordered regions span residues 1–126 (MQSG…QEGQ), 175–231 (MQDL…PGNM), 293–466 (QKAG…GFTK), 511–558 (SPAI…DNVG), and 580–649 (TSTD…ASAR). Residues 23-62 (ASTSSAASPSSSSSSVQQQQQQQQQQQQQQQLASRQQQQQ) are compositionally biased toward low complexity. Positions 38-58 (VQQQQQQQQQQQQQQQLASRQ) form a coiled coil. The span at 79–88 (GVQGMMGGGN) shows a compositional bias: gly residues. Composition is skewed to low complexity over residues 91 to 102 (SSPGSMQMPQQS), 110 to 126 (QQQQ…QEGQ), and 180 to 192 (PSSQ…SKPS). Residues 204–223 (ESSSQQRNETKSHPQQQVGT) show a composition bias toward polar residues. The segment covering 301–320 (ASQSPSIPISSQPASSSVVP) has biased composition (low complexity). Composition is skewed to polar residues over residues 325–339 (PHAN…QSGS), 347–358 (STGSFASTSSPR), 383–412 (QPTN…STKK), and 421–433 (QMQQ…TPTP). The segment covering 445 to 463 (SNSSLQSGQGTQQAQQRSG) has biased composition (low complexity). Residues 463-499 (GFTKQQLHVLKAQILAFRRLKKGEGSLPPELLQAISP) enclose the QLQ domain. Basic and acidic residues-rich tracts occupy residues 517-537 (VQDR…ECGK) and 611-621 (PRSDSTADKGK). The segment covering 626-638 (DGSQSKVPPQANS) has biased composition (polar residues). The Nuclear localization signal 1 signature appears at 705-712 (LKKINGLL). A coiled-coil region spans residues 726–795 (VLRLQIEEKK…QKAVREKQLK (70 aa)). One can recognise a Helicase ATP-binding domain in the interval 993 to 1158 (LSLYNNKLNG…WSLLNLLLPD (166 aa)). Residue 1006 to 1013 (DEMGLGKT) coordinates ATP. Residues 1109-1129 (DEAQRMKDRESVLARDLDRYR) adopt a coiled-coil conformation. One can recognise a Helicase C-terminal domain in the interval 1312-1489 (ILDRILIKLQ…QYKIDMADEV (178 aa)). 2 disordered regions span residues 1583–1775 (SKKP…DEEQ) and 1789–1894 (LRPR…NAGA). The segment covering 1608–1617 (KRGRPKSKKI) has biased composition (basic residues). A coiled-coil region spans residues 1618-1638 (NYKEIEDDIAGYSEESSEERN). Phosphoserine is present on Ser1641. Positions 1642–1657 (GNEEEGDIRQFDDDEL) are enriched in acidic residues. A compositionally biased stretch (basic and acidic residues) spans 1821-1832 (TVVDSHSSRQDQ). A compositionally biased stretch (low complexity) spans 1833 to 1842 (SDSSSRLRSV). Composition is skewed to polar residues over residues 1848-1870 (ASTS…QLTV) and 1882-1892 (DGTSPISSSNA). Residues 1895-2005 (RMSHIIQKRC…NLFFDLLKMS (111 aa)) form the Bromo domain. Residues 1901–1908 (QKRCKIVI) carry the Nuclear localization signal 2 motif. A compositionally biased stretch (polar residues) spans 2022-2032 (GSAPTLVSTPT). Positions 2022–2193 (GSAPTLVSTP…DSGKRRPSHL (172 aa)) are disordered. Residue Ser2137 is modified to Phosphoserine. The span at 2149-2166 (LAQQQRWPNQPTHPNNSG) shows a compositional bias: polar residues.

Belongs to the SNF2/RAD54 helicase family. Interacts with SWI3B, SWI3C, H3 and H4, but not with SWI3A, SWI3D or BSH. Interacts with LFY. Interacts with REF6. Binds to FGT1. Highly expressed in inflorescences and leaves. Low expression in siliques, roots and seedlings. Detected in shoot apical meristem, root meristem, vascular tissue of developing leaves, petals, stamens filaments, anthers and carpels.

It localises to the nucleus. It carries out the reaction ATP + H2O = ADP + phosphate + H(+). In terms of biological role, ATPase subunit of a multiprotein complex equivalent of the SWI/SNF complex that acts by remodeling the chromatin by catalyzing an ATP-dependent alteration in the structure of nucleosomal DNA. Represses embryonic genes in leaves and controls shoot development and flowering. Activates flower homeotic genes. The association of BRM with its target genes requires REF6. Necessary to acquire heat stress (HS) memory, by globally binding to HS memory genes. The polypeptide is ATP-dependent helicase BRM (Arabidopsis thaliana (Mouse-ear cress)).